The primary structure comprises 202 residues: Holliday junction branch migration complex subunit RuvA (202 aa).

The interval 1 to 63 (MIAFLSGRVV…EDSLTLFGFA (63 aa)) is domain I. Residues 64–142 (DDDERDTFER…EPGGDTAATP (79 aa)) form a domain II region. The tract at residues 143-152 (EQSAAAAPRN) is flexible linker. A domain III region spans residues 152–202 (NWRAQVVSGLVNLGWSTREAEAAADAVAAEAGEQPDVAALLRSALRRLSRA).

Belongs to the RuvA family. In terms of assembly, homotetramer. Forms an RuvA(8)-RuvB(12)-Holliday junction (HJ) complex. HJ DNA is sandwiched between 2 RuvA tetramers; dsDNA enters through RuvA and exits via RuvB. An RuvB hexamer assembles on each DNA strand where it exits the tetramer. Each RuvB hexamer is contacted by two RuvA subunits (via domain III) on 2 adjacent RuvB subunits; this complex drives branch migration. In the full resolvosome a probable DNA-RuvA(4)-RuvB(12)-RuvC(2) complex forms which resolves the HJ.

It is found in the cytoplasm. Functionally, the RuvA-RuvB-RuvC complex processes Holliday junction (HJ) DNA during genetic recombination and DNA repair, while the RuvA-RuvB complex plays an important role in the rescue of blocked DNA replication forks via replication fork reversal (RFR). RuvA specifically binds to HJ cruciform DNA, conferring on it an open structure. The RuvB hexamer acts as an ATP-dependent pump, pulling dsDNA into and through the RuvAB complex. HJ branch migration allows RuvC to scan DNA until it finds its consensus sequence, where it cleaves and resolves the cruciform DNA. In Thermobifida fusca (strain YX), this protein is Holliday junction branch migration complex subunit RuvA.